Reading from the N-terminus, the 112-residue chain is Nitrogen regulatory protein P-II (112 aa).

Tyr51 carries the O-UMP-tyrosine modification.

The protein belongs to the P(II) protein family. As to quaternary structure, homotrimer.

Its function is as follows. P-II indirectly controls the transcription of the glutamine synthetase gene (glnA). P-II prevents NR-II-catalyzed conversion of NR-I to NR-I-phosphate, the transcriptional activator of glnA. When P-II is uridylylated to P-II-UMP, these events are reversed. When the ratio of Gln to 2-ketoglutarate decreases, P-II is uridylylated to P-II-UMP, which causes the deadenylation of glutamine synthetase, so activating the enzyme. The sequence is that of Nitrogen regulatory protein P-II (glnB) from Rhodobacter capsulatus (Rhodopseudomonas capsulata).